We begin with the raw amino-acid sequence, 269 residues long: MNLNNLENIRYNEIKEFSDKIKKEFTFSQKKQVMDIIEKLNKDSRKNVIKLGQALEKFLNKYEEELKRTNNMYNFDRRYGNNYLIAGVDEVGRGPLAGPIVAAAVVLDLNVEEMQRIFNIKDSKKLSEKKREELDIIIREKAISYNIALVDNKTIDERGISWSNNEVLKRAVEGLKVKPDLVLSDGYAVKNLNIRNEFIIKGDSKSISIASSSIIAKVYRDSMMKEYSKGLNMYGFNHNAGYGTEEHVQAIKKHGPSKIHRMSFLTNIL.

An RNase H type-2 domain is found at 83–269; the sequence is YLIAGVDEVG…HRMSFLTNIL (187 aa). Residues aspartate 89, glutamate 90, and aspartate 185 each coordinate a divalent metal cation.

The protein belongs to the RNase HII family. Mn(2+) is required as a cofactor. The cofactor is Mg(2+).

It localises to the cytoplasm. The enzyme catalyses Endonucleolytic cleavage to 5'-phosphomonoester.. Its function is as follows. Endonuclease that specifically degrades the RNA of RNA-DNA hybrids. The polypeptide is Ribonuclease HII (Clostridium botulinum (strain Hall / ATCC 3502 / NCTC 13319 / Type A)).